A 345-amino-acid chain; its full sequence is Biotin synthase (345 aa).

Residues 67-295 enclose the Radical SAM core domain; sequence YKVQLASLLS…KSRIRLSAGR (229 aa). [4Fe-4S] cluster contacts are provided by C82, C86, and C89. 4 residues coordinate [2Fe-2S] cluster: C126, C158, C218, and R290.

Belongs to the radical SAM superfamily. Biotin synthase family. In terms of assembly, homodimer. It depends on [4Fe-4S] cluster as a cofactor. [2Fe-2S] cluster serves as cofactor.

The enzyme catalyses (4R,5S)-dethiobiotin + (sulfur carrier)-SH + 2 reduced [2Fe-2S]-[ferredoxin] + 2 S-adenosyl-L-methionine = (sulfur carrier)-H + biotin + 2 5'-deoxyadenosine + 2 L-methionine + 2 oxidized [2Fe-2S]-[ferredoxin]. It functions in the pathway cofactor biosynthesis; biotin biosynthesis; biotin from 7,8-diaminononanoate: step 2/2. Functionally, catalyzes the conversion of dethiobiotin (DTB) to biotin by the insertion of a sulfur atom into dethiobiotin via a radical-based mechanism. In Prochlorococcus marinus (strain NATL1A), this protein is Biotin synthase.